A 430-amino-acid polypeptide reads, in one-letter code: MATDAAELFKEALSLFPGGVNSPVRAMKHLPTPLIVKRAEGAFLYTIDGVKLIDYCMGFGPLILGHRHPTVLEAVRRSLEDGWLYGALTRNEVELAKEINSSIRSVEMIRFVNTGTEAVMNAVRLARGFTGRRYIVKFEGNYHGAFDYVLVKAGSGAATWGVPTSAGILEDAVKYTLVVPYNDVEALERVFREHGSEIALLLVEPIAGNYGLIIPDLEFIKATRELTERYGALLLFDEVITGFRVGLNGAQGLFGIKPDLTTLGKIIGGGFPIGAFGGRRDVMSMITPQGPVYNAGTFNAHPVSVAAGLATIRVIKSGGVYEVANEAAERITEAILDSASRSGFDIVVKRIASMFQFYFKKGDVKTPADVRASDEKLYLTFHREALSRGVYFTPSQYEVNFTSAAHSRDVVDETIRVIEEVFKALKTKAH.

At lysine 265 the chain carries N6-(pyridoxal phosphate)lysine.

The protein belongs to the class-III pyridoxal-phosphate-dependent aminotransferase family. HemL subfamily. Pyridoxal 5'-phosphate serves as cofactor.

The protein resides in the cytoplasm. It carries out the reaction (S)-4-amino-5-oxopentanoate = 5-aminolevulinate. Its pathway is porphyrin-containing compound metabolism; protoporphyrin-IX biosynthesis; 5-aminolevulinate from L-glutamyl-tRNA(Glu): step 2/2. The protein is Glutamate-1-semialdehyde 2,1-aminomutase of Caldivirga maquilingensis (strain ATCC 700844 / DSM 13496 / JCM 10307 / IC-167).